The sequence spans 330 residues: Erlin-2-B (330 aa).

Residues 1-2 (MS) lie on the Cytoplasmic side of the membrane. Residues 3–23 (HAGAIAALGVALIAAALFSAI) traverse the membrane as a helical segment. At 24–330 (HKIEEGHVGV…NEPAAAEELK (307 aa)) the chain is on the lumenal side. An N-linked (GlcNAc...) asparagine glycan is attached at N106. The disordered stretch occupies residues 308–330 (SSSAGPRVQSAKRNEPAAAEELK). Residues 319–330 (KRNEPAAAEELK) show a composition bias toward basic and acidic residues.

This sequence belongs to the band 7/mec-2 family.

It is found in the endoplasmic reticulum membrane. Its function is as follows. Mediates the endoplasmic reticulum-associated degradation (ERAD) of inositol 1,4,5-trisphosphate receptors (IP3Rs). Promotes sterol-accelerated ERAD of HMGCR. Involved in regulation of cellular cholesterol homeostasis by regulation the SREBP signaling pathway. The chain is Erlin-2-B (erlin2-b) from Xenopus laevis (African clawed frog).